We begin with the raw amino-acid sequence, 312 residues long: Non-structural protein 12A (312 aa).

Low complexity predominate over residues 1–23 (MFKSGSGSLKRSGSISSVKSFSG). 3 disordered regions span residues 1–37 (MFKS…RGSV), 62–99 (FVPE…QNAD), and 111–161 (ESSK…GTGD). Over residues 63 to 77 (VPEKTKSEGNLKDKS) the composition is skewed to basic and acidic residues. Positions 78-98 (SVITGNFGSSGPINAHTNQNA) are enriched in polar residues. Residues 122-134 (DARHTATDSRLSQ) show a composition bias toward basic and acidic residues.

The protein belongs to the phytoreovirus non-structural protein Pns12A family.

It is found in the host cytoplasm. Functionally, constituent of viral factories. Binds to ssRNA and dsRNA. The chain is Non-structural protein 12A from Alopecurus aequalis (Barnyard grass).